Consider the following 200-residue polypeptide: Elongation factor Ts (200 aa).

Residues 83–86 (TDFA) are involved in Mg(2+) ion dislocation from EF-Tu.

This sequence belongs to the EF-Ts family.

Its subcellular location is the cytoplasm. Associates with the EF-Tu.GDP complex and induces the exchange of GDP to GTP. It remains bound to the aminoacyl-tRNA.EF-Tu.GTP complex up to the GTP hydrolysis stage on the ribosome. The chain is Elongation factor Ts from Syntrophobacter fumaroxidans (strain DSM 10017 / MPOB).